A 627-amino-acid polypeptide reads, in one-letter code: (-)-alpha-pinene synthase 1, chloroplastic (627 aa).

The transit peptide at 1 to 36 directs the protein to the chloroplast; sequence MALVSIAPLASKSCLHKSLSSSAHELKTICRTIPTL. Mg(2+) contacts are provided by aspartate 378, aspartate 382, and aspartate 530. The DDXXD motif signature appears at 378 to 382; it reads DDMYD.

It belongs to the terpene synthase family. Tpsd subfamily. Mg(2+) serves as cofactor. Requires Mn(2+) as cofactor.

It is found in the plastid. The protein resides in the chloroplast. The enzyme catalyses (2E)-geranyl diphosphate = (1S,5S)-beta-pinene + diphosphate. It catalyses the reaction (2E)-geranyl diphosphate = (1S,5S)-alpha-pinene + diphosphate. The protein operates within terpene metabolism; oleoresin biosynthesis. In terms of biological role, terpene synthase (TPS) involved in the biosynthesis of monoterpene natural products included in conifer oleoresin secretions and volatile emissions; these compounds contribute to biotic and abiotic stress defense against herbivores and pathogens. Catalyzes the conversion of (2E)-geranyl diphosphate (GPP) to (1S,5S)-beta-pinene. The chain is (-)-alpha-pinene synthase 1, chloroplastic from Picea sitchensis (Sitka spruce).